The primary structure comprises 255 residues: 4-diphosphocytidyl-2-C-methyl-D-erythritol kinase (255 aa).

Lys6 is a catalytic residue. 95–105 (PVCAGLGGGSS) contributes to the ATP binding site. The active site involves Asp137.

It belongs to the GHMP kinase family. IspE subfamily.

It catalyses the reaction 4-CDP-2-C-methyl-D-erythritol + ATP = 4-CDP-2-C-methyl-D-erythritol 2-phosphate + ADP + H(+). It participates in isoprenoid biosynthesis; isopentenyl diphosphate biosynthesis via DXP pathway; isopentenyl diphosphate from 1-deoxy-D-xylulose 5-phosphate: step 3/6. Functionally, catalyzes the phosphorylation of the position 2 hydroxy group of 4-diphosphocytidyl-2C-methyl-D-erythritol. This is 4-diphosphocytidyl-2-C-methyl-D-erythritol kinase from Campylobacter jejuni subsp. jejuni serotype O:23/36 (strain 81-176).